The primary structure comprises 160 residues: Na(+)/H(+) antiporter subunit E1 (160 aa).

Transmembrane regions (helical) follow at residues 1-21, 27-47, 49-69, and 101-121; these read MAIQILVNLILSVFWLFVTGS, FILGYLFALLLVYIMRGVLPG, FYLITVYKIIKLFLVFLIELI, and WQIVLLSNLITLTPGTIVLGI.

The protein belongs to the CPA3 antiporters (TC 2.A.63) subunit E family. As to quaternary structure, may form a heterooligomeric complex that consists of seven subunits: mnhA1, mnhB1, mnhC1, mnhD1, mnhE1, mnhF1 and mnhG1.

It is found in the cell membrane. In terms of biological role, mnh complex is a Na(+)/H(+) antiporter involved in Na(+) excretion. The polypeptide is Na(+)/H(+) antiporter subunit E1 (mnhE1) (Staphylococcus saprophyticus subsp. saprophyticus (strain ATCC 15305 / DSM 20229 / NCIMB 8711 / NCTC 7292 / S-41)).